We begin with the raw amino-acid sequence, 952 residues long: Leucine--tRNA ligase (952 aa).

Residues 65-76 (PYPSGAGLHVGH) carry the 'HIGH' region motif. Residues 727-731 (KMGKS) carry the 'KMSKS' region motif. Lys730 contributes to the ATP binding site.

This sequence belongs to the class-I aminoacyl-tRNA synthetase family.

Its subcellular location is the cytoplasm. The catalysed reaction is tRNA(Leu) + L-leucine + ATP = L-leucyl-tRNA(Leu) + AMP + diphosphate. The polypeptide is Leucine--tRNA ligase (Salinispora arenicola (strain CNS-205)).